We begin with the raw amino-acid sequence, 82 residues long: Myosin light chain alkali (82 aa).

Residues 7–42 (GCYGDFIECLKLYDKEENGTMMLAELQHALLALGES) form the EF-hand domain.

In terms of assembly, myosin is a hexamer of 2 heavy chains and 4 light chains.

This Drosophila sechellia (Fruit fly) protein is Myosin light chain alkali (Mlc1).